Reading from the N-terminus, the 160-residue chain is MGVTKKPDLNDPVLRAKLAKGMGHNYYGEPAWPNDLLYIFPVVILGTIACNVGLAVLEPSMIGEPADPFATPLEILPEWYFFPVFQILRTVPNKLLGVLLMVSVPTGLLTVPFLENVNKFQNPFRRPVATTVFLFGTALSLWLGIGATLPIDKSLTLGLF.

3 helical membrane-spanning segments follow: residues 36 to 56 (LLYI…GLAV), 95 to 115 (LLGV…PFLE), and 131 to 151 (TVFL…TLPI).

The protein belongs to the cytochrome b family. PetD subfamily. As to quaternary structure, the 4 large subunits of the cytochrome b6-f complex are cytochrome b6, subunit IV (17 kDa polypeptide, petD), cytochrome f and the Rieske protein, while the 4 small subunits are petG, petL, petM and petN. The complex functions as a dimer.

It localises to the plastid. The protein resides in the chloroplast thylakoid membrane. Its function is as follows. Component of the cytochrome b6-f complex, which mediates electron transfer between photosystem II (PSII) and photosystem I (PSI), cyclic electron flow around PSI, and state transitions. The chain is Cytochrome b6-f complex subunit 4 from Amborella trichopoda.